A 186-amino-acid chain; its full sequence is MLGDCLLIIAIAFGTALAGEGITWLLVYRSDHYKRLKADMDKKTKKLEKKKQEVGDTNDKNIKRKLEREEERLKATNRDMSMFKMKSMFAIGLAFTALLSTFNSIFEGRVVAKLPFYPIGFIQGLSHRNLIGEDMTDCSFIFLYILCTMTVRQNLQKILGFAPSRAMARQQSSPWAPPNSQMNYLR.

Over 1-6 (MLGDCL) the chain is Cytoplasmic. A helical membrane pass occupies residues 7–27 (LIIAIAFGTALAGEGITWLLV). At 28–87 (YRSDHYKRLKADMDKKTKKLEKKKQEVGDTNDKNIKRKLEREEERLKATNRDMSMFKMKS) the chain is on the lumenal side. Positions 30 to 86 (SDHYKRLKADMDKKTKKLEKKKQEVGDTNDKNIKRKLEREEERLKATNRDMSMFKMK) form a coiled coil. A helical membrane pass occupies residues 88 to 108 (MFAIGLAFTALLSTFNSIFEG). Residues 109–134 (RVVAKLPFYPIGFIQGLSHRNLIGED) lie on the Cytoplasmic side of the membrane. Residues 135–151 (MTDCSFIFLYILCTMTV) constitute an intramembrane region (pore-forming). The Cytoplasmic segment spans residues 152–186 (RQNLQKILGFAPSRAMARQQSSPWAPPNSQMNYLR).

Belongs to the TMCO1 family. As to quaternary structure, homodimer and homotetramer.

Its subcellular location is the endoplasmic reticulum membrane. Its function is as follows. Calcium-selective channel required to prevent calcium stores from overfilling. This is Calcium load-activated calcium channel homolog from Caenorhabditis elegans.